The primary structure comprises 504 residues: Flavin-dependent halogenase armH3 (504 aa).

4 residues coordinate FAD: Gly16, Ala19, Glu49, and Ala149. Ser329 and Gly330 together coordinate chloride. Position 331 (Ile331) interacts with FAD. A disordered region spans residues 444 to 475 (NNLRTPVDTGAADVKAKHAPSETDAQNPLQSM).

This sequence belongs to the flavin-dependent halogenase family.

The enzyme catalyses melleolide F + FADH2 + chloride + O2 = 6'-chloromelleolide F + FAD + 2 H2O + H(+). Flavin-dependent halogenase involved in the biosynthesis of melleolides, a range of antifungal and phytotoxic polyketide derivatives composed of an orsellinic acid (OA) moiety esterified to various sesquiterpene alcohols. The halogenase catalyzes the transfer of a single chlorine atom to the melleolide backbone, resulting in a 6'-chloromelleolide product. The enzyme acts on free substrate and does not depend on carrier-protein-dependent acceptor molecules. The sequence is that of Flavin-dependent halogenase armH3 from Armillaria mellea (Honey mushroom).